We begin with the raw amino-acid sequence, 474 residues long: Gamma-aminobutyric acid receptor subunit gamma-2 (474 aa).

Residues 1 to 38 (MSSPNTWSIGSSVYSPVFSQKMTLWILLLLSLYPGFTS) form the signal peptide. At 39–274 (QKSDDDYEDY…FDLSRRMGYF (236 aa)) the chain is on the extracellular side. N-linked (GlcNAc...) asparagine glycosylation is found at N51 and N128. C189 and C203 are joined by a disulfide. N-linked (GlcNAc...) asparagine glycosylation is present at N246. Residues 275–295 (TIQTYIPCTLIVVLSWVSFWI) traverse the membrane as a helical segment. The Cytoplasmic portion of the chain corresponds to 296-301 (NKDAVP). A helical transmembrane segment spans residues 302 to 321 (ARTSLGITTVLTMTTLSTIA). Over 322–333 (RKSLPKVSYVTA) the chain is Extracellular. Residues 334–358 (MDLFVSVCFIFVFSALVEYGTLHYF) traverse the membrane as a helical segment. Topologically, residues 359–450 (VSNRKPSKDK…IHIRIAKMDS (92 aa)) are cytoplasmic. S381 is modified (phosphoserine; by PKC). Residues 451–472 (YARIFFPTAFCLFNLVYWVSYL) traverse the membrane as a helical segment. Residues 473 to 474 (YL) lie on the Extracellular side of the membrane.

The protein belongs to the ligand-gated ion channel (TC 1.A.9) family. Gamma-aminobutyric acid receptor (TC 1.A.9.5) subfamily. GABRG2 sub-subfamily. In terms of assembly, heteropentamer, formed by a combination of alpha (GABRA1-6), beta (GABRB1-3), gamma (GABRG1-3), delta (GABRD), epsilon (GABRE), rho (GABRR1-3), pi (GABRP) and theta (GABRQ) chains, each subunit exhibiting distinct physiological and pharmacological properties. Interacts with GABARAP. Interacts with KIF21B. Identified in a complex of 720 kDa composed of LHFPL4, NLGN2, GABRA1, GABRB2, GABRG2 and GABRB3. Interacts with LHFPL4. Interacts with SHISA7; interaction leads to the regulation of GABA(A) receptor trafficking, channel deactivation kinetics and pharmacology. Glycosylated. In terms of processing, palmitoylated by ZDHHC3/GODZ; required for the accumulation of GABA(A) receptors at the postsynaptic membrane of inhibitory GABAergic synapses. In terms of tissue distribution, expressed in brain neurons (at protein level).

The protein localises to the postsynaptic cell membrane. It localises to the cell membrane. Its subcellular location is the cell projection. The protein resides in the dendrite. It is found in the cytoplasmic vesicle membrane. The catalysed reaction is chloride(in) = chloride(out). With respect to regulation, allosterically activated by benzodiazepines. Activated by pentobarbital. Inhibited by the antagonist bicuculline. Inhibited by zinc ions. Potentiated by histamine. Gamma subunit of the heteropentameric ligand-gated chloride channel gated by gamma-aminobutyric acid (GABA), a major inhibitory neurotransmitter in the brain. GABA-gated chloride channels, also named GABA(A) receptors (GABAAR), consist of five subunits arranged around a central pore and contain GABA active binding site(s) located at the alpha and beta subunit interface(s). When activated by GABA, GABAARs selectively allow the flow of chloride anions across the cell membrane down their electrochemical gradient. Gamma-2/GABRG2-containing GABAARs are found at both synaptic and extrasynaptic sites. Chloride influx into the postsynaptic neuron following GABAAR opening decreases the neuron ability to generate a new action potential, thereby reducing nerve transmission. GABAARs containing alpha-1 and beta-2 or -3 subunits exhibit synaptogenic activity; the gamma-2 subunit being necessary but not sufficient to induce rapid synaptic contacts formation. Extrasynaptic gamma-2-containing receptors contribute to the tonic GABAergic inhibition. GABAARs function also as histamine receptor where histamine binds at the interface of two neighboring beta subunits and potentiates GABA response in a gamma-2 subunit-controlled manner. The polypeptide is Gamma-aminobutyric acid receptor subunit gamma-2 (Mus musculus (Mouse)).